The chain runs to 60 residues: Metallothionein (60 aa).

Positions 1-28 (MDPCECSKTGNCTCGGSCTCKNCSCTSC) are beta. Residues Cys-4, Cys-6, Cys-12, Cys-14, Cys-18, Cys-20, Cys-23, Cys-25, Cys-28, Cys-32, Cys-33, Cys-35, Cys-36, Cys-40, Cys-43, Cys-47, Cys-49, Cys-54, Cys-58, and Cys-59 each coordinate a divalent metal cation. The segment at 29 to 60 (KKSCCSCCPSGCSKCASGCVCKGKTCDTSCCQ) is alpha.

It belongs to the metallothionein superfamily. Type 1 family.

Functionally, metallothioneins have a high content of cysteine residues that bind various heavy metals. This chain is Metallothionein (mt), found in Gobiomorphus cotidianus (New Zealand common bully).